Here is a 191-residue protein sequence, read N- to C-terminus: 2-amino-4-hydroxy-6-hydroxymethyldihydropteridine pyrophosphokinase (191 aa).

The protein belongs to the HPPK family.

The enzyme catalyses 6-hydroxymethyl-7,8-dihydropterin + ATP = (7,8-dihydropterin-6-yl)methyl diphosphate + AMP + H(+). Its pathway is cofactor biosynthesis; tetrahydrofolate biosynthesis; 2-amino-4-hydroxy-6-hydroxymethyl-7,8-dihydropteridine diphosphate from 7,8-dihydroneopterin triphosphate: step 4/4. Its function is as follows. Catalyzes the transfer of pyrophosphate from adenosine triphosphate (ATP) to 6-hydroxymethyl-7,8-dihydropterin, an enzymatic step in folate biosynthesis pathway. This is 2-amino-4-hydroxy-6-hydroxymethyldihydropteridine pyrophosphokinase (folK) from Mycobacterium leprae (strain TN).